The sequence spans 598 residues: Arginine--tRNA ligase (598 aa).

Positions 139–149 (ANPTGPMHVGH) match the 'HIGH' region motif.

It belongs to the class-I aminoacyl-tRNA synthetase family. As to quaternary structure, monomer.

It is found in the cytoplasm. The catalysed reaction is tRNA(Arg) + L-arginine + ATP = L-arginyl-tRNA(Arg) + AMP + diphosphate. The protein is Arginine--tRNA ligase of Bradyrhizobium sp. (strain BTAi1 / ATCC BAA-1182).